We begin with the raw amino-acid sequence, 138 residues long: Protein NrdI (138 aa).

It belongs to the NrdI family.

Its function is as follows. Probably involved in ribonucleotide reductase function. The chain is Protein NrdI from Mycobacterium leprae (strain TN).